Reading from the N-terminus, the 405-residue chain is L-carnitine CoA-transferase (405 aa).

Lys97 and Arg104 together coordinate CoA. Residue Asp169 is the Nucleophile of the active site.

It belongs to the CoA-transferase III family. CaiB subfamily. As to quaternary structure, homodimer.

It localises to the cytoplasm. It carries out the reaction crotonobetainyl-CoA + (R)-carnitine = crotonobetaine + (R)-carnitinyl-CoA. The enzyme catalyses 4-(trimethylamino)butanoyl-CoA + (R)-carnitine = (R)-carnitinyl-CoA + 4-(trimethylamino)butanoate. It functions in the pathway amine and polyamine metabolism; carnitine metabolism. Catalyzes the reversible transfer of the CoA moiety from gamma-butyrobetainyl-CoA to L-carnitine to generate L-carnitinyl-CoA and gamma-butyrobetaine. Is also able to catalyze the reversible transfer of the CoA moiety from gamma-butyrobetainyl-CoA or L-carnitinyl-CoA to crotonobetaine to generate crotonobetainyl-CoA. This is L-carnitine CoA-transferase from Escherichia coli O139:H28 (strain E24377A / ETEC).